We begin with the raw amino-acid sequence, 184 residues long: Protein GrpE (184 aa).

A compositionally biased stretch (basic and acidic residues) spans 1–12; sequence MADEQLNEKDLN. Residues 1–22 form a disordered region; sequence MADEQLNEKDLNAEEAGAVDNG.

The protein belongs to the GrpE family. In terms of assembly, homodimer.

It is found in the cytoplasm. In terms of biological role, participates actively in the response to hyperosmotic and heat shock by preventing the aggregation of stress-denatured proteins, in association with DnaK and GrpE. It is the nucleotide exchange factor for DnaK and may function as a thermosensor. Unfolded proteins bind initially to DnaJ; upon interaction with the DnaJ-bound protein, DnaK hydrolyzes its bound ATP, resulting in the formation of a stable complex. GrpE releases ADP from DnaK; ATP binding to DnaK triggers the release of the substrate protein, thus completing the reaction cycle. Several rounds of ATP-dependent interactions between DnaJ, DnaK and GrpE are required for fully efficient folding. This is Protein GrpE from Pseudomonas putida (strain W619).